A 582-amino-acid polypeptide reads, in one-letter code: ATP-dependent lipid A-core flippase (582 aa).

Transmembrane regions (helical) follow at residues 26 to 46 (LIAA…LIYL), 68 to 88 (ILVM…SYCL), 140 to 160 (YVLV…AVMV), 164 to 184 (WQLS…ISIV), and 252 to 272 (GLVQ…ATFP). Positions 27-310 (IAASVALILN…LTSVNSQFQR (284 aa)) constitute an ABC transmembrane type-1 domain. The region spanning 342-578 (ITFDNVIFSY…GGAYKQLYSM (237 aa)) is the ABC transporter domain. 376–383 (GRSGSGKS) is a binding site for ATP.

This sequence belongs to the ABC transporter superfamily. Lipid exporter (TC 3.A.1.106) family. In terms of assembly, homodimer.

The protein localises to the cell inner membrane. It catalyses the reaction ATP + H2O + lipid A-core oligosaccharideSide 1 = ADP + phosphate + lipid A-core oligosaccharideSide 2.. In terms of biological role, involved in lipopolysaccharide (LPS) biosynthesis. Translocates lipid A-core from the inner to the outer leaflet of the inner membrane. Transmembrane domains (TMD) form a pore in the inner membrane and the ATP-binding domain (NBD) is responsible for energy generation. In Haemophilus ducreyi (strain 35000HP / ATCC 700724), this protein is ATP-dependent lipid A-core flippase.